The sequence spans 216 residues: Glycerol-3-phosphate acyltransferase 3 (216 aa).

Transmembrane regions (helical) follow at residues 6–26 (LLLV…YLVS), 58–78 (LVAS…GLVI), 92–112 (LLFA…WPVF), 125–145 (FGGM…VLII), and 158–178 (ITGV…SGFP).

It belongs to the PlsY family. As to quaternary structure, probably interacts with PlsX.

It localises to the cell membrane. The catalysed reaction is an acyl phosphate + sn-glycerol 3-phosphate = a 1-acyl-sn-glycero-3-phosphate + phosphate. The protein operates within lipid metabolism; phospholipid metabolism. Its function is as follows. Catalyzes the transfer of an acyl group from acyl-phosphate (acyl-PO(4)) to glycerol-3-phosphate (G3P) to form lysophosphatidic acid (LPA). This enzyme utilizes acyl-phosphate as fatty acyl donor, but not acyl-CoA or acyl-ACP. This chain is Glycerol-3-phosphate acyltransferase 3, found in Dehalococcoides mccartyi (strain CBDB1).